A 129-amino-acid polypeptide reads, in one-letter code: Large ribosomal subunit protein bL32m (129 aa).

Residues 1–63 (MAAMTAAAAA…LEDIWEGILR (63 aa)) constitute a mitochondrion transit peptide. Zn(2+)-binding residues include C94, C97, C107, and C110.

This sequence belongs to the bacterial ribosomal protein bL32 family. As to quaternary structure, component of the mitochondrial large ribosomal subunit (mt-LSU). Mature N.crassa 74S mitochondrial ribosomes consist of a small (37S) and a large (54S) subunit. The 37S small subunit contains a 16S ribosomal RNA (16S mt-rRNA) and 32 different proteins. The 54S large subunit contains a 23S rRNA (23S mt-rRNA) and 42 different proteins. bL32m has a zinc binding site. In terms of processing, MRPL32 precursor is processed by the m-AAA protease (composed of YTA12/RCA1 and YTA10/AFG3), which cleaves the N-terminal transit peptide. Cleavage by the m-AAA protease takes place prior to assembly into the large subunit, an essential step for mitochondrial ribosome (mitoribosome) assembly. Proper processing by the m-AAA protease is dependent on the zinc-binding region within the tightly folded C-terminal domain of MRPL32: zinc-dependent folding halts degradation initiated from the N-terminus and triggers the release of mature MRPL32.

It is found in the mitochondrion. Functionally, component of the mitochondrial ribosome (mitoribosome), a dedicated translation machinery responsible for the synthesis of mitochondrial genome-encoded proteins, including at least some of the essential transmembrane subunits of the mitochondrial respiratory chain. The mitoribosomes are attached to the mitochondrial inner membrane and translation products are cotranslationally integrated into the membrane. The sequence is that of Large ribosomal subunit protein bL32m (mrpl32) from Neurospora crassa (strain ATCC 24698 / 74-OR23-1A / CBS 708.71 / DSM 1257 / FGSC 987).